A 460-amino-acid polypeptide reads, in one-letter code: Probable elastin-binding protein EbpS (460 aa).

Residues 1–40 (MSNNNFKDDFEKNRQSINPDEHQTELKEDDKTNENKKEAD) are compositionally biased toward basic and acidic residues. Positions 1-277 (MSNNNFKDDF…NQYNDQSEGK (277 aa)) are disordered. Low complexity predominate over residues 41-57 (SQNSLSNNSNQQFPPRN). The span at 74–128 (QQDDKHQKNSDAKTTEGSLDDRYDEAQLQQQHDKSQQQNKTEKQSQDNRMKDGKD) shows a compositional bias: basic and acidic residues. The span at 177–192 (ATGAGIAGAAGVAGAA) shows a compositional bias: low complexity. Over residues 203 to 226 (DKQDSKHSNHENDEKSVKNDDQKQ) the composition is skewed to basic and acidic residues. Positions 264–273 (SNQNNQYNDQ) are enriched in low complexity. A helical transmembrane segment spans residues 285–305 (ILLPLIAAILILGAIAIFGGM). Over residues 313–359 (SKSDDQKIANQSKKDSDKKDGAQSEDNKDKKSDSNKDKKSDSDKNAD) the composition is skewed to basic and acidic residues. The disordered stretch occupies residues 313-411 (SKSDDQKIAN…NQQATQGQQS (99 aa)). Positions 364 to 411 (NSSSNPNATSTNNNDNVANNNSNYTNQNQQDNANQNSNNQQATQGQQS) are enriched in low complexity. Positions 410-458 (QSHTVYGQENLYRIAIQYYGEGTQANVDKIKRANGLSSNNIHNGQTLVI) constitute a LysM domain.

It localises to the cell membrane. The chain is Probable elastin-binding protein EbpS (ebpS) from Staphylococcus epidermidis (strain ATCC 35984 / DSM 28319 / BCRC 17069 / CCUG 31568 / BM 3577 / RP62A).